The primary structure comprises 145 residues: Protein SprT-like (145 aa).

Residues 4–141 enclose the SprT-like domain; it reads TDYVKEVSRQ…CGNCHGKLRH (138 aa). Zn(2+) is bound at residue H64. The active site involves E65. H68 serves as a coordination point for Zn(2+).

This sequence belongs to the SprT family. Requires Zn(2+) as cofactor.

It is found in the cytoplasm. This is Protein SprT-like from Streptococcus mutans serotype c (strain ATCC 700610 / UA159).